The sequence spans 257 residues: NAD-capped RNA hydrolase NudC (257 aa).

Positions 25 and 69 each coordinate substrate. Zn(2+) contacts are provided by Cys-98 and Cys-101. Glu-111 contacts substrate. Positions 116 and 119 each coordinate Zn(2+). Residue Tyr-124 participates in substrate binding. Residues 125–248 form the Nudix hydrolase domain; sequence PQIAPCIIVA…TVARRLIEDT (124 aa). The a divalent metal cation site is built by Ala-158, Glu-174, and Glu-178. Residues 159-180 carry the Nudix box motif; the sequence is GFVEVGETLEQAVAREVMEESG. Residue 192–199 coordinates substrate; the sequence is QPWPFPQS. Glu-219 serves as a coordination point for a divalent metal cation. Ala-241 lines the substrate pocket.

Belongs to the Nudix hydrolase family. NudC subfamily. As to quaternary structure, homodimer. It depends on Mg(2+) as a cofactor. Mn(2+) serves as cofactor. The cofactor is Zn(2+).

It carries out the reaction a 5'-end NAD(+)-phospho-ribonucleoside in mRNA + H2O = a 5'-end phospho-adenosine-phospho-ribonucleoside in mRNA + beta-nicotinamide D-ribonucleotide + 2 H(+). It catalyses the reaction NAD(+) + H2O = beta-nicotinamide D-ribonucleotide + AMP + 2 H(+). The enzyme catalyses NADH + H2O = reduced beta-nicotinamide D-ribonucleotide + AMP + 2 H(+). Its function is as follows. mRNA decapping enzyme that specifically removes the nicotinamide adenine dinucleotide (NAD) cap from a subset of mRNAs by hydrolyzing the diphosphate linkage to produce nicotinamide mononucleotide (NMN) and 5' monophosphate mRNA. The NAD-cap is present at the 5'-end of some mRNAs and stabilizes RNA against 5'-processing. Has preference for mRNAs with a 5'-end purine. Catalyzes the hydrolysis of a broad range of dinucleotide pyrophosphates. In Escherichia coli O127:H6 (strain E2348/69 / EPEC), this protein is NAD-capped RNA hydrolase NudC.